Reading from the N-terminus, the 471-residue chain is Glutamate--tRNA ligase (471 aa).

A 'HIGH' region motif is present at residues 9-19; the sequence is PSPTGYLHVGG. C98, C100, C125, and H127 together coordinate Zn(2+). The 'KMSKS' region signature appears at 237–241; sequence KLSKR. Residue K240 participates in ATP binding.

The protein belongs to the class-I aminoacyl-tRNA synthetase family. Glutamate--tRNA ligase type 1 subfamily. In terms of assembly, monomer. The cofactor is Zn(2+).

It localises to the cytoplasm. The catalysed reaction is tRNA(Glu) + L-glutamate + ATP = L-glutamyl-tRNA(Glu) + AMP + diphosphate. Its function is as follows. Catalyzes the attachment of glutamate to tRNA(Glu) in a two-step reaction: glutamate is first activated by ATP to form Glu-AMP and then transferred to the acceptor end of tRNA(Glu). The protein is Glutamate--tRNA ligase of Escherichia coli O9:H4 (strain HS).